The sequence spans 351 residues: Methionine import ATP-binding protein MetN (351 aa).

In terms of domain architecture, ABC transporter spans 4 to 249; it reads VQLDHVSVTF…PKAELTQKFV (246 aa). 41-48 contacts ATP; it reads GFSGAGKS.

This sequence belongs to the ABC transporter superfamily. Methionine importer (TC 3.A.1.24) family. In terms of assembly, the complex is composed of two ATP-binding proteins (MetN), two transmembrane proteins (MetI) and a solute-binding protein (MetQ).

Its subcellular location is the cell membrane. The enzyme catalyses L-methionine(out) + ATP + H2O = L-methionine(in) + ADP + phosphate + H(+). The catalysed reaction is D-methionine(out) + ATP + H2O = D-methionine(in) + ADP + phosphate + H(+). Its function is as follows. Part of the ABC transporter complex MetNIQ involved in methionine import. Responsible for energy coupling to the transport system. The sequence is that of Methionine import ATP-binding protein MetN from Lactobacillus delbrueckii subsp. bulgaricus (strain ATCC 11842 / DSM 20081 / BCRC 10696 / JCM 1002 / NBRC 13953 / NCIMB 11778 / NCTC 12712 / WDCM 00102 / Lb 14).